Here is a 169-residue protein sequence, read N- to C-terminus: MRGMNLQLVCLTLLAFSSWSLCSDSEEDVRALEADLLTNMHTSKISKASPPSWKMTLLNVCSLINNVNSPAEEAGDMHDDDLVGKRKLPLVLDGFSLEAMLTIFQLQKICRSRAFQHWEIIQEDILDNVNDKNEKEEVIKRKIPYILKRQLYENKPRRPYILKRGSYYY.

The first 22 residues, 1-22 (MRGMNLQLVCLTLLAFSSWSLC), serve as a signal peptide directing secretion.

This sequence belongs to the neurotensin family. As to quaternary structure, interacts with NTSR1. Interacts with SORT1. Interacts with SORL1. Post-translationally, neurotensin is cleaved and degraded by Angiotensin-converting enzyme (ACE) and neprilysin (MME).

It localises to the secreted. Its subcellular location is the cytoplasmic vesicle. The protein resides in the secretory vesicle. Functionally, neurotensin may play an endocrine or paracrine role in the regulation of fat metabolism. It causes contraction of smooth muscle. This chain is Neurotensin/neuromedin N (Nts), found in Mus musculus (Mouse).